Consider the following 166-residue polypeptide: Ribosome maturation factor RimM (166 aa).

The PRC barrel domain maps to 92–164 (EGVYYDFQLI…KIIIDPIPGL (73 aa)).

The protein belongs to the RimM family. As to quaternary structure, binds ribosomal protein uS19.

The protein localises to the cytoplasm. Functionally, an accessory protein needed during the final step in the assembly of 30S ribosomal subunit, possibly for assembly of the head region. Essential for efficient processing of 16S rRNA. May be needed both before and after RbfA during the maturation of 16S rRNA. It has affinity for free ribosomal 30S subunits but not for 70S ribosomes. The polypeptide is Ribosome maturation factor RimM (Dehalococcoides mccartyi (strain CBDB1)).